Reading from the N-terminus, the 644-residue chain is Macrolide export ATP-binding/permease protein MacB (644 aa).

The ABC transporter domain occupies 4–242; the sequence is IECKNINRYF…SNVGRIQEKA (239 aa). An ATP-binding site is contributed by 40-47; it reads GQSGSGKS. A run of 4 helical transmembrane segments spans residues 270-290, 524-544, 574-594, and 607-627; these read LLTMLGIIIGIASVVSVVALG, IALISLVVGGIGVMNIMLVSV, LICIIGGLVGVGLSAAVSLVF, and AASVIGAVACSTGIGIAFGFM.

This sequence belongs to the ABC transporter superfamily. Macrolide exporter (TC 3.A.1.122) family. Homodimer.

The protein resides in the cell inner membrane. Its function is as follows. Non-canonical ABC transporter that contains transmembrane domains (TMD), which form a pore in the inner membrane, and an ATP-binding domain (NBD), which is responsible for energy generation. Overexpression confers resistance against macrolides. This Neisseria gonorrhoeae protein is Macrolide export ATP-binding/permease protein MacB.